The primary structure comprises 168 residues: S-ribosylhomocysteine lyase (168 aa).

Positions 54, 58, and 128 each coordinate Fe cation.

Belongs to the LuxS family. As to quaternary structure, homodimer. The cofactor is Fe cation.

It catalyses the reaction S-(5-deoxy-D-ribos-5-yl)-L-homocysteine = (S)-4,5-dihydroxypentane-2,3-dione + L-homocysteine. Functionally, involved in the synthesis of autoinducer 2 (AI-2) which is secreted by bacteria and is used to communicate both the cell density and the metabolic potential of the environment. The regulation of gene expression in response to changes in cell density is called quorum sensing. Catalyzes the transformation of S-ribosylhomocysteine (RHC) to homocysteine (HC) and 4,5-dihydroxy-2,3-pentadione (DPD). This Mannheimia succiniciproducens (strain KCTC 0769BP / MBEL55E) protein is S-ribosylhomocysteine lyase.